Consider the following 436-residue polypeptide: UDP-N-acetylmuramate--L-alanine ligase (436 aa).

Glycine 108–serine 114 serves as a coordination point for ATP.

It belongs to the MurCDEF family.

It is found in the cytoplasm. The enzyme catalyses UDP-N-acetyl-alpha-D-muramate + L-alanine + ATP = UDP-N-acetyl-alpha-D-muramoyl-L-alanine + ADP + phosphate + H(+). It participates in cell wall biogenesis; peptidoglycan biosynthesis. In terms of biological role, cell wall formation. This chain is UDP-N-acetylmuramate--L-alanine ligase, found in Bacillus cereus (strain B4264).